The chain runs to 231 residues: Large ribosomal subunit protein uL3 (231 aa).

Q151 is subject to N5-methylglutamine.

The protein belongs to the universal ribosomal protein uL3 family. Part of the 50S ribosomal subunit. Forms a cluster with proteins L14 and L19. Methylated by PrmB.

Its function is as follows. One of the primary rRNA binding proteins, it binds directly near the 3'-end of the 23S rRNA, where it nucleates assembly of the 50S subunit. In Ehrlichia canis (strain Jake), this protein is Large ribosomal subunit protein uL3.